A 339-amino-acid chain; its full sequence is 2-halobenzoate 1,2-dioxygenase electron transfer component (339 aa).

The 2Fe-2S ferredoxin-type domain occupies 3 to 96 (HSIALRFEDD…DCVVRILASS (94 aa)). 4 residues coordinate [2Fe-2S] cluster: Cys-40, Cys-45, Cys-48, and Cys-80. A ferredoxin-reductase region spans residues 98 to 336 (ACQVKKSTMT…NFYFEKFAPT (239 aa)). Positions 103 to 203 (KSTMTGQMTE…DGPYGAFYLR (101 aa)) constitute an FAD-binding FR-type domain.

This sequence belongs to the bacterial ring-hydroxylating dioxygenase ferredoxin reductase family. Monomer. It is part of 2-halobenzoate dioxygenase two component enzyme system. The other component is a dioxygenase component consisting of 3 large (CbdA) subunits and 3 small (CbdB) subunits. It depends on FAD as a cofactor. The cofactor is [2Fe-2S] cluster.

The enzyme catalyses 2 reduced [2Fe-2S]-[ferredoxin] + NAD(+) + H(+) = 2 oxidized [2Fe-2S]-[ferredoxin] + NADH. Its pathway is xenobiotic degradation; benzoate degradation via CoA ligation. Its function is as follows. Electron transfer component of 2-halobenzoate 1,2-dioxygenase system. The sequence is that of 2-halobenzoate 1,2-dioxygenase electron transfer component (cbdC) from Burkholderia cepacia (Pseudomonas cepacia).